The sequence spans 369 residues: Methylthioribose-1-phosphate isomerase (369 aa).

Residues 54–56, R95, and Q208 contribute to the substrate site; that span reads RGA. The active-site Proton donor is D249. 259-260 serves as a coordination point for substrate; it reads NK.

It belongs to the eIF-2B alpha/beta/delta subunits family. MtnA subfamily.

It carries out the reaction 5-(methylsulfanyl)-alpha-D-ribose 1-phosphate = 5-(methylsulfanyl)-D-ribulose 1-phosphate. Its pathway is amino-acid biosynthesis; L-methionine biosynthesis via salvage pathway; L-methionine from S-methyl-5-thio-alpha-D-ribose 1-phosphate: step 1/6. In terms of biological role, catalyzes the interconversion of methylthioribose-1-phosphate (MTR-1-P) into methylthioribulose-1-phosphate (MTRu-1-P). This is Methylthioribose-1-phosphate isomerase from Desulfatibacillum aliphaticivorans.